The sequence spans 457 residues: Methylenetetrahydrofolate--tRNA-(uracil-5-)-methyltransferase TrmFO (457 aa).

An FAD-binding site is contributed by 8–13 (GGGLAG).

Belongs to the MnmG family. TrmFO subfamily. Requires FAD as cofactor.

The protein resides in the cytoplasm. It catalyses the reaction uridine(54) in tRNA + (6R)-5,10-methylene-5,6,7,8-tetrahydrofolate + NADH + H(+) = 5-methyluridine(54) in tRNA + (6S)-5,6,7,8-tetrahydrofolate + NAD(+). It carries out the reaction uridine(54) in tRNA + (6R)-5,10-methylene-5,6,7,8-tetrahydrofolate + NADPH + H(+) = 5-methyluridine(54) in tRNA + (6S)-5,6,7,8-tetrahydrofolate + NADP(+). Functionally, catalyzes the folate-dependent formation of 5-methyl-uridine at position 54 (M-5-U54) in all tRNAs. The protein is Methylenetetrahydrofolate--tRNA-(uracil-5-)-methyltransferase TrmFO of Thermosynechococcus vestitus (strain NIES-2133 / IAM M-273 / BP-1).